The chain runs to 106 residues: Large ribosomal subunit protein P1A (106 aa).

Ser2 is subject to N-acetylserine. Residues 73–106 are disordered; sequence GGVAGGEAGEAEAEKEEEEAKEESDDDMGFGLFD. Over residues 81–100 the composition is skewed to acidic residues; it reads GEAEAEKEEEEAKEESDDDM. Residue Ser96 is modified to Phosphoserine.

It belongs to the eukaryotic ribosomal protein P1/P2 family. Component of the large ribosomal subunit (LSU). Mature yeast ribosomes consist of a small (40S) and a large (60S) subunit. The 40S small subunit contains 1 molecule of ribosomal RNA (18S rRNA) and 33 different proteins (encoded by 57 genes). The large 60S subunit contains 3 rRNA molecules (25S, 5.8S and 5S rRNA) and 46 different proteins (encoded by 81 genes). The 5 acidic ribosomal P-proteins form the stalk structure of the 60S subunit. They are organized as a pentameric complex in which uL10/P0 interacts with 2 heterodimers, P1A-P2B and P1B-P2A. In terms of processing, N-terminally acetylated by acetyltransferase NatA.

It localises to the cytoplasm. In terms of biological role, component of the ribosome, a large ribonucleoprotein complex responsible for the synthesis of proteins in the cell. The small ribosomal subunit (SSU) binds messenger RNAs (mRNAs) and translates the encoded message by selecting cognate aminoacyl-transfer RNA (tRNA) molecules. The large subunit (LSU) contains the ribosomal catalytic site termed the peptidyl transferase center (PTC), which catalyzes the formation of peptide bonds, thereby polymerizing the amino acids delivered by tRNAs into a polypeptide chain. The nascent polypeptides leave the ribosome through a tunnel in the LSU and interact with protein factors that function in enzymatic processing, targeting, and the membrane insertion of nascent chains at the exit of the ribosomal tunnel. The sequence is that of Large ribosomal subunit protein P1A from Saccharomyces cerevisiae (strain ATCC 204508 / S288c) (Baker's yeast).